The following is a 119-amino-acid chain: Large ribosomal subunit protein bL20 (119 aa).

Belongs to the bacterial ribosomal protein bL20 family.

Binds directly to 23S ribosomal RNA and is necessary for the in vitro assembly process of the 50S ribosomal subunit. It is not involved in the protein synthesizing functions of that subunit. The polypeptide is Large ribosomal subunit protein bL20 (Alkaliphilus metalliredigens (strain QYMF)).